The primary structure comprises 585 residues: Arginine--tRNA ligase (585 aa).

A 'HIGH' region motif is present at residues 131–141; it reads ANPTGPMHVGH.

It belongs to the class-I aminoacyl-tRNA synthetase family. As to quaternary structure, monomer.

Its subcellular location is the cytoplasm. It carries out the reaction tRNA(Arg) + L-arginine + ATP = L-arginyl-tRNA(Arg) + AMP + diphosphate. This is Arginine--tRNA ligase from Rhizobium etli (strain ATCC 51251 / DSM 11541 / JCM 21823 / NBRC 15573 / CFN 42).